A 360-amino-acid polypeptide reads, in one-letter code: Capsular polysaccharide phosphotransferase LcbA (360 aa).

The protein belongs to the stealth family.

Part of a group II capsule biosynthesis locus. The polypeptide is Capsular polysaccharide phosphotransferase LcbA (lcbA) (Aeromonas hydrophila).